The chain runs to 457 residues: Amidophosphoribosyltransferase (457 aa).

The active-site Nucleophile is Cys-2. Residues 2–223 (CGVVGIYHPD…PGKAAIIKDG (222 aa)) form the Glutamine amidotransferase type-2 domain. Residue Cys-239 participates in [4Fe-4S] cluster binding. Mg(2+)-binding residues include Ser-286, Asp-348, and Asp-349. Residues Cys-385, Cys-438, and Cys-441 each coordinate [4Fe-4S] cluster.

In the C-terminal section; belongs to the purine/pyrimidine phosphoribosyltransferase family. Mg(2+) is required as a cofactor. Requires [4Fe-4S] cluster as cofactor.

The enzyme catalyses 5-phospho-beta-D-ribosylamine + L-glutamate + diphosphate = 5-phospho-alpha-D-ribose 1-diphosphate + L-glutamine + H2O. The protein operates within purine metabolism; IMP biosynthesis via de novo pathway; N(1)-(5-phospho-D-ribosyl)glycinamide from 5-phospho-alpha-D-ribose 1-diphosphate: step 1/2. Its function is as follows. Catalyzes the formation of phosphoribosylamine from phosphoribosylpyrophosphate (PRPP) and glutamine. The polypeptide is Amidophosphoribosyltransferase (Archaeoglobus fulgidus (strain ATCC 49558 / DSM 4304 / JCM 9628 / NBRC 100126 / VC-16)).